The following is a 133-amino-acid chain: Large ribosomal subunit protein eL14 (133 aa).

Belongs to the eukaryotic ribosomal protein eL14 family.

This chain is Large ribosomal subunit protein eL14 (RPL14), found in Griffithsia japonica (Red alga).